Here is a 469-residue protein sequence, read N- to C-terminus: Repressible acid phosphatase (469 aa).

The N-terminal stretch at 1–16 is a signal peptide; the sequence is MLSILLSLLSLSGTHA. Asparagine 23 and asparagine 31 each carry an N-linked (GlcNAc...) asparagine glycan. Histidine 77 acts as the Nucleophile in catalysis. Residues asparagine 129, asparagine 201, asparagine 229, asparagine 250, and asparagine 317 are each glycosylated (N-linked (GlcNAc...) asparagine). Aspartate 340 acts as the Proton donor in catalysis. N-linked (GlcNAc...) asparagine glycans are attached at residues asparagine 392 and asparagine 447.

It belongs to the histidine acid phosphatase family. In terms of processing, glycosylated during secretion across the membrane.

The protein resides in the secreted. It carries out the reaction a phosphate monoester + H2O = an alcohol + phosphate. In Kluyveromyces lactis (strain ATCC 8585 / CBS 2359 / DSM 70799 / NBRC 1267 / NRRL Y-1140 / WM37) (Yeast), this protein is Repressible acid phosphatase (PHO5).